Consider the following 412-residue polypeptide: Cellobiose 2-epimerase (412 aa).

The protein belongs to the cellobiose 2-epimerase family.

The enzyme catalyses D-cellobiose = beta-D-glucosyl-(1-&gt;4)-D-mannopyranose. Functionally, catalyzes the reversible epimerization of cellobiose to 4-O-beta-D-glucopyranosyl-D-mannose (Glc-Man). Can also use lactose, epilactose, mannobiose and cellotriose. Highly specific for oligosaccharides linked by the beta-1,4-glycosidic linkage. Shows preference for lactose. In Rhodothermus marinus (Rhodothermus obamensis), this protein is Cellobiose 2-epimerase (ce).